Consider the following 359-residue polypeptide: DNA polymerase IV (359 aa).

The UmuC domain maps to 4 to 184 (IVHVDMDAFY…LKVNRIPGVG (181 aa)). Positions 8 and 102 each coordinate Mg(2+). Glu-103 is an active-site residue.

It belongs to the DNA polymerase type-Y family. In terms of assembly, monomer. Mg(2+) is required as a cofactor.

The protein localises to the cytoplasm. It carries out the reaction DNA(n) + a 2'-deoxyribonucleoside 5'-triphosphate = DNA(n+1) + diphosphate. In terms of biological role, poorly processive, error-prone DNA polymerase involved in untargeted mutagenesis. Copies undamaged DNA at stalled replication forks, which arise in vivo from mismatched or misaligned primer ends. These misaligned primers can be extended by PolIV. Exhibits no 3'-5' exonuclease (proofreading) activity. May be involved in translesional synthesis, in conjunction with the beta clamp from PolIII. In Xanthomonas oryzae pv. oryzae (strain MAFF 311018), this protein is DNA polymerase IV.